Reading from the N-terminus, the 118-residue chain is Vesicle-associated membrane protein 1 (118 aa).

Over residues 1–15 (MSAPAQPPAEGTEGA) the composition is skewed to low complexity. The tract at residues 1–36 (MSAPAQPPAEGTEGAAPGGGPPGPPPNMTSNRRLQQ) is disordered. Over 1 to 96 (MSAPAQPPAE…KRKYWWKNCK (96 aa)) the chain is Cytoplasmic. One can recognise a v-SNARE coiled-coil homology domain in the interval 33–93 (RLQQTQAQVE…AKLKRKYWWK (61 aa)). Serine 63 is subject to Phosphoserine. Residues 97–116 (MMIMLGAICAIIVVVIVIYF) traverse the membrane as a helical; Anchor for type IV membrane protein segment. Residues 117 to 118 (FT) lie on the Vesicular side of the membrane.

This sequence belongs to the synaptobrevin family. In terms of assembly, interacts with VAPA and VAPB. In terms of processing, (Microbial infection) Targeted and hydrolyzed by C.botulinum neurotoxin type X (BoNT/X) which hydrolyzes the 68-Arg-|-Ala-69 bond and probably inhibits neurotransmitter release. It remains unknown whether BoNT/X is ever produced, or what organisms it targets. As to expression, highly expressed in the zona incerta and rostral periolivary region of the brain. Other neuroanatomical regions show negligible expression. Expressed in the retina, expression observed in the outer segments of the photoreceptors, in the outer and inner plexiform layers, and in a subset of ganglion cells.

It is found in the cytoplasmic vesicle. It localises to the secretory vesicle. Its subcellular location is the synaptic vesicle membrane. The protein localises to the synapse. The protein resides in the synaptosome. It is found in the cytoplasmic vesicle membrane. Involved in the targeting and/or fusion of transport vesicles to their target membrane. This chain is Vesicle-associated membrane protein 1 (Vamp1), found in Mus musculus (Mouse).